Reading from the N-terminus, the 75-residue chain is Sec-independent protein translocase protein TatA (75 aa).

Residues 1–21 (MGMPSMPELLIVLAIVVLLFG) traverse the membrane as a helical segment. A disordered region spans residues 47–75 (DEEEEVKEITKKEEPKVEAAAEEKKSENA). Basic and acidic residues predominate over residues 53 to 75 (KEITKKEEPKVEAAAEEKKSENA).

This sequence belongs to the TatA/E family. The Tat system comprises two distinct complexes: a TatABC complex, containing multiple copies of TatA, TatB and TatC subunits, and a separate TatA complex, containing only TatA subunits. Substrates initially bind to the TatABC complex, which probably triggers association of the separate TatA complex to form the active translocon.

The protein localises to the cell inner membrane. Part of the twin-arginine translocation (Tat) system that transports large folded proteins containing a characteristic twin-arginine motif in their signal peptide across membranes. TatA could form the protein-conducting channel of the Tat system. The sequence is that of Sec-independent protein translocase protein TatA from Sulfurovum sp. (strain NBC37-1).